We begin with the raw amino-acid sequence, 548 residues long: Membrane protein insertase YidC (548 aa).

The chain crosses the membrane as a helical span at residues Asn6–Asp26. The segment at Asn28–Ser55 is disordered. The segment covering Gln30 to Gln50 has biased composition (low complexity). 4 helical membrane-spanning segments follow: residues Phe350–Tyr370, Leu420–Leu440, Leu458–Ile478, and Pro499–Val519.

The protein belongs to the OXA1/ALB3/YidC family. Type 1 subfamily. In terms of assembly, interacts with the Sec translocase complex via SecD. Specifically interacts with transmembrane segments of nascent integral membrane proteins during membrane integration.

Its subcellular location is the cell inner membrane. Required for the insertion and/or proper folding and/or complex formation of integral membrane proteins into the membrane. Involved in integration of membrane proteins that insert both dependently and independently of the Sec translocase complex, as well as at least some lipoproteins. Aids folding of multispanning membrane proteins. This is Membrane protein insertase YidC from Shigella flexneri.